The following is a 101-amino-acid chain: Protein Tat (101 aa).

The segment covering 1–10 has biased composition (basic and acidic residues); sequence MEPVDPRLEP. Residues 1–20 are disordered; that stretch reads MEPVDPRLEPWNHPGSQPKT. The interaction with human CREBBP stretch occupies residues 1-24; sequence MEPVDPRLEPWNHPGSQPKTACNN. Residues 1–48 are transactivation; the sequence is MEPVDPRLEPWNHPGSQPKTACNNCYCKRCCYHCLYCFTKKGLGISYG. Positions 22, 25, and 27 each coordinate Zn(2+). The interval 22–37 is cysteine-rich; the sequence is CNNCYCKRCCYHCLYC. At Lys-28 the chain carries N6-acetyllysine; by host PCAF. Zn(2+) is bound by residues Cys-30, His-33, Cys-34, and Cys-37. The segment at 38 to 48 is core; the sequence is FTKKGLGISYG. Residues 48–58 are compositionally biased toward basic residues; that stretch reads GRKKRSQRRRT. A disordered region spans residues 48-101; sequence GRKKRSQRRRTPQSSKSHQDLIPEQPLSQQQGDQTGQKKQKEALESKTEADPCD. Positions 49-57 match the Nuclear localization signal, RNA-binding (TAR), and protein transduction motif; that stretch reads RKKRSQRRR. The interval 49 to 86 is interaction with the host capping enzyme RNGTT; it reads RKKRSQRRRTPQSSKSHQDLIPEQPLSQQQGDQTGQKK. 2 positions are modified to N6-acetyllysine; by host EP300 and GCN5L2: Lys-50 and Lys-51. The residue at position 52 (Arg-52) is an Asymmetric dimethylarginine; by host PRMT6. The segment covering 86 to 101 has biased composition (basic and acidic residues); sequence KQKEALESKTEADPCD.

This sequence belongs to the lentiviruses Tat family. Interacts with host CCNT1. Associates with the P-TEFb complex composed at least of Tat, P-TEFb (CDK9 and CCNT1), TAR RNA, RNA Pol II. Recruits the HATs CREBBP, TAF1/TFIID, EP300, PCAF and GCN5L2. Interacts with host KAT5/Tip60; this interaction targets the latter to degradation. Interacts with the host deacetylase SIRT1. Interacts with host capping enzyme RNGTT; this interaction stimulates RNGTT. Binds to host KDR, and to the host integrins ITGAV/ITGB3 and ITGA5/ITGB1. Interacts with host KPNB1/importin beta-1 without previous binding to KPNA1/importin alpha-1. Interacts with EIF2AK2. Interacts with host nucleosome assembly protein NAP1L1; this interaction may be required for the transport of Tat within the nucleus, since the two proteins interact at the nuclear rim. Interacts with host C1QBP/SF2P32; this interaction involves lysine-acetylated Tat. Interacts with the host chemokine receptors CCR2, CCR3 and CXCR4. Interacts with host DPP4/CD26; this interaction may trigger an anti-proliferative effect. Interacts with host LDLR. Interacts with the host extracellular matrix metalloproteinase MMP1. Interacts with host PRMT6; this interaction mediates Tat's methylation. Interacts with, and is ubiquitinated by MDM2/Hdm2. Interacts with host PSMC3 and HTATIP2. Interacts with STAB1; this interaction may overcome SATB1-mediated repression of IL2 and IL2RA (interleukin) in T cells by binding to the same domain than HDAC1. Interacts (when acetylated) with human CDK13, thereby increasing HIV-1 mRNA splicing and promoting the production of the doubly spliced HIV-1 protein Nef. Interacts with host TBP; this interaction modulates the activity of transcriptional pre-initiation complex. Interacts with host RELA. Interacts with host PLSCR1; this interaction negatively regulates Tat transactivation activity by altering its subcellular distribution. In terms of processing, asymmetrical arginine methylation by host PRMT6 seems to diminish the transactivation capacity of Tat and affects the interaction with host CCNT1. Acetylation by EP300, CREBBP, GCN5L2/GCN5 and PCAF regulates the transactivation activity of Tat. EP300-mediated acetylation of Lys-50 promotes dissociation of Tat from the TAR RNA through the competitive binding to PCAF's bromodomain. In addition, the non-acetylated Tat's N-terminus can also interact with PCAF. PCAF-mediated acetylation of Lys-28 enhances Tat's binding to CCNT1. Lys-50 is deacetylated by SIRT1. Post-translationally, polyubiquitination by host MDM2 does not target Tat to degradation, but activates its transactivation function and fosters interaction with CCNT1 and TAR RNA. In terms of processing, phosphorylated by EIF2AK2 on serine and threonine residues adjacent to the basic region important for TAR RNA binding and function. Phosphorylation of Tat by EIF2AK2 is dependent on the prior activation of EIF2AK2 by dsRNA.

The protein resides in the host nucleus. The protein localises to the host nucleolus. It localises to the host cytoplasm. Its subcellular location is the secreted. Functionally, transcriptional activator that increases RNA Pol II processivity, thereby increasing the level of full-length viral transcripts. Recognizes a hairpin structure at the 5'-LTR of the nascent viral mRNAs referred to as the transactivation responsive RNA element (TAR) and recruits the cyclin T1-CDK9 complex (P-TEFb complex) that will in turn hyperphosphorylate the RNA polymerase II to allow efficient elongation. The CDK9 component of P-TEFb and other Tat-activated kinases hyperphosphorylate the C-terminus of RNA Pol II that becomes stabilized and much more processive. Other factors such as HTATSF1/Tat-SF1, SUPT5H/SPT5, and HTATIP2 are also important for Tat's function. Besides its effect on RNA Pol II processivity, Tat induces chromatin remodeling of proviral genes by recruiting the histone acetyltransferases (HATs) CREBBP, EP300 and PCAF to the chromatin. This also contributes to the increase in proviral transcription rate, especially when the provirus integrates in transcriptionally silent region of the host genome. To ensure maximal activation of the LTR, Tat mediates nuclear translocation of NF-kappa-B by interacting with host RELA. Through its interaction with host TBP, Tat may also modulate transcription initiation. Tat can reactivate a latently infected cell by penetrating in it and transactivating its LTR promoter. In the cytoplasm, Tat is thought to act as a translational activator of HIV-1 mRNAs. Its function is as follows. Extracellular circulating Tat can be endocytosed by surrounding uninfected cells via the binding to several surface receptors such as CD26, CXCR4, heparan sulfate proteoglycans (HSPG) or LDLR. Neurons are rarely infected, but they internalize Tat via their LDLR. Through its interaction with nuclear HATs, Tat is potentially able to control the acetylation-dependent cellular gene expression. Modulates the expression of many cellular genes involved in cell survival, proliferation or in coding for cytokines or cytokine receptors. Tat plays a role in T-cell and neurons apoptosis. Tat induced neurotoxicity and apoptosis probably contribute to neuroAIDS. Circulating Tat also acts as a chemokine-like and/or growth factor-like molecule that binds to specific receptors on the surface of the cells, affecting many cellular pathways. In the vascular system, Tat binds to ITGAV/ITGB3 and ITGA5/ITGB1 integrins dimers at the surface of endothelial cells and competes with bFGF for heparin-binding sites, leading to an excess of soluble bFGF. This chain is Protein Tat, found in Homo sapiens (Human).